A 400-amino-acid chain; its full sequence is Acetate kinase (400 aa).

Asn10 provides a ligand contact to Mg(2+). Lys17 contacts ATP. A substrate-binding site is contributed by Arg91. The Proton donor/acceptor role is filled by Asp150. ATP-binding positions include 210–214 (HLGSG), 285–287 (DCR), and 333–337 (GIGEN). Glu387 is a binding site for Mg(2+).

Belongs to the acetokinase family. In terms of assembly, homodimer. The cofactor is Mg(2+). Mn(2+) is required as a cofactor.

Its subcellular location is the cytoplasm. It catalyses the reaction acetate + ATP = acetyl phosphate + ADP. Its pathway is metabolic intermediate biosynthesis; acetyl-CoA biosynthesis; acetyl-CoA from acetate: step 1/2. Its function is as follows. Catalyzes the formation of acetyl phosphate from acetate and ATP. Can also catalyze the reverse reaction. This chain is Acetate kinase, found in Baumannia cicadellinicola subsp. Homalodisca coagulata.